A 928-amino-acid polypeptide reads, in one-letter code: Receptor-like kinase TMK4 (928 aa).

Positions 1–24 (MEAPTPLLLLVLLTTITFFTTSVA) are cleaved as a signal peptide. Over 25-472 (DDQTAMLALA…GGSSGGGGSK (448 aa)) the chain is Extracellular. A disulfide bridge links Cys51 with Cys58. LRR repeat units lie at residues 61–84 (GRVT…ISTL), 85–107 (SELK…FAKL), 108–130 (SSLQ…AFAG), 132–157 (TSLQ…LVDS), 158–180 (TSLT…IFDS), 181–205 (LASL…LGKS), 207–229 (IQNL…LSSM), 230–251 (TSLS…DLSK), 252–276 (SENL…LLTL), and 278–298 (SLKN…LFSP). An N-linked (GlcNAc...) asparagine glycan is attached at Asn144. N-linked (GlcNAc...) asparagine glycosylation is present at Asn193. Asn281 is a glycosylation site (N-linked (GlcNAc...) asparagine). Cystine bridges form between Cys310-Cys318 and Cys348-Cys356. LRR repeat units lie at residues 360 to 383 (GKNV…AIAN), 384 to 407 (LTSL…ELTF), and 408 to 435 (MTSL…VKFS). Asn383 is a glycosylation site (N-linked (GlcNAc...) asparagine). The disordered stretch occupies residues 445–465 (TNGGDGSSPGTGGASGGPGGS). The helical transmembrane segment at 473-493 (VGVIVGVIVAVLVFLAILGFV) threads the bilayer. Topologically, residues 494–928 (VYKFVMKRKY…PNTFDSADGR (435 aa)) are cytoplasmic. Residues 578–858 (FSEDNILGRG…HAVNVLGPLV (281 aa)) form the Protein kinase domain. Residues 584-592 (LGRGGFGVV) and Lys606 each bind ATP. The active-site Proton acceptor is the Asp707. Composition is skewed to polar residues over residues 898–911 (FHGD…QSSI) and 918–928 (FPNTFDSADGR). The tract at residues 898–928 (FHGDFSYSQTQSSIPPKASGFPNTFDSADGR) is disordered.

The protein belongs to the protein kinase superfamily. Ser/Thr protein kinase family. In terms of assembly, interacts with BAK1 (via kinase domain), SERK4 and SERK5. Expressed in roots, leaves, stems, siliques and flowers. Ubiquitous, with a high expression in mature pollen grains and in the pericycle and the xylem vasculature of the primary and lateral roots.

The protein resides in the membrane. The enzyme catalyses L-seryl-[protein] + ATP = O-phospho-L-seryl-[protein] + ADP + H(+). The catalysed reaction is L-threonyl-[protein] + ATP = O-phospho-L-threonyl-[protein] + ADP + H(+). In terms of biological role, involved in auxin signal transduction and cell expansion and proliferation regulation. May be involved in brassinosteroid-mediated plant growth and development via auxin regulation. May be involved in microspore and pollen development. In Arabidopsis thaliana (Mouse-ear cress), this protein is Receptor-like kinase TMK4.